The following is a 356-amino-acid chain: Heparan sulfate 2-O-sulfotransferase 1 (356 aa).

The Cytoplasmic segment spans residues Met-1–Lys-11. A helical; Signal-anchor for type II membrane protein transmembrane segment spans residues Leu-12 to Glu-28. The stretch at Met-24–Arg-51 forms a coiled coil. At Asn-29 to Asn-356 the chain is on the lumenal side. The adenosine 3',5'-bisphosphate site is built by Lys-83, Thr-84, Ala-85, Ser-86, Thr-87, and Ser-88. 2 N-linked (GlcNAc...) asparagine glycosylation sites follow: Asn-108 and Asn-127. Residues His-140 and His-142 contribute to the active site. Adenosine 3',5'-bisphosphate contacts are provided by Arg-164 and Ser-172. 2 disulfides stabilise this stretch: Cys-201/Cys-209 and Cys-222/Cys-228. Residues Tyr-279, Ser-285, Thr-290, and Lys-293 each contribute to the adenosine 3',5'-bisphosphate site.

The protein belongs to the sulfotransferase 3 family. As to quaternary structure, homotrimer. Interacts with the C5-epimerase GLCE. Post-translationally, N-glycosylated.

The protein localises to the golgi apparatus membrane. Catalyzes the transfer of a sulfo group from 3'-phospho-5'-adenylyl sulfate (PAPS) to the 2-OH position of iduronic acid (IdoA) or glucuronic acid (GlcA) within the heparan sulfate (HS) chain and participates in HS biosynthesis. Required for metanephric development of kidney formation, suggesting that 2-O-sulfation within HS is essential for signaling between ureteric bud and metanephric mesenchyme. This chain is Heparan sulfate 2-O-sulfotransferase 1, found in Homo sapiens (Human).